Here is a 303-residue protein sequence, read N- to C-terminus: Coenzyme PQQ synthesis protein B (303 aa).

The protein belongs to the PqqB family.

Its pathway is cofactor biosynthesis; pyrroloquinoline quinone biosynthesis. May be involved in the transport of PQQ or its precursor to the periplasm. This chain is Coenzyme PQQ synthesis protein B, found in Acinetobacter baumannii (strain ACICU).